The sequence spans 218 residues: Pyridoxine/pyridoxamine 5'-phosphate oxidase (218 aa).

Substrate contacts are provided by residues 14–17 (RREY) and Lys-72. FMN-binding positions include 67 to 72 (RIVLLK), 82 to 83 (YT), Arg-88, Lys-89, and Gln-111. Substrate is bound by residues Tyr-129, Arg-133, and Ser-137. Residues 146–147 (QS) and Trp-191 contribute to the FMN site. 197-199 (RLH) serves as a coordination point for substrate. Arg-201 serves as a coordination point for FMN.

This sequence belongs to the pyridoxamine 5'-phosphate oxidase family. In terms of assembly, homodimer. It depends on FMN as a cofactor.

It carries out the reaction pyridoxamine 5'-phosphate + O2 + H2O = pyridoxal 5'-phosphate + H2O2 + NH4(+). The enzyme catalyses pyridoxine 5'-phosphate + O2 = pyridoxal 5'-phosphate + H2O2. It participates in cofactor metabolism; pyridoxal 5'-phosphate salvage; pyridoxal 5'-phosphate from pyridoxamine 5'-phosphate: step 1/1. It functions in the pathway cofactor metabolism; pyridoxal 5'-phosphate salvage; pyridoxal 5'-phosphate from pyridoxine 5'-phosphate: step 1/1. Catalyzes the oxidation of either pyridoxine 5'-phosphate (PNP) or pyridoxamine 5'-phosphate (PMP) into pyridoxal 5'-phosphate (PLP). The sequence is that of Pyridoxine/pyridoxamine 5'-phosphate oxidase from Escherichia coli O127:H6 (strain E2348/69 / EPEC).